The primary structure comprises 802 residues: Phenylalanine--tRNA ligase beta subunit (802 aa).

In terms of domain architecture, tRNA-binding spans 38 to 148 (SKNFERVIVG…SEVPVGTDIS (111 aa)). The B5 domain maps to 403-478 (VIQKKIFVLK…RVFGYHNIPA (76 aa)). Mg(2+) is bound by residues Asp-456, Asp-462, and Asp-466. Residues 703 to 796 (SLYPRCSRDI…LQEKFNAILR (94 aa)) enclose the FDX-ACB domain.

It belongs to the phenylalanyl-tRNA synthetase beta subunit family. Type 1 subfamily. Tetramer of two alpha and two beta subunits. Mg(2+) serves as cofactor.

It localises to the cytoplasm. The enzyme catalyses tRNA(Phe) + L-phenylalanine + ATP = L-phenylalanyl-tRNA(Phe) + AMP + diphosphate + H(+). The sequence is that of Phenylalanine--tRNA ligase beta subunit from Buchnera aphidicola subsp. Baizongia pistaciae (strain Bp).